The sequence spans 110 residues: Phosphoribosyl-AMP cyclohydrolase (110 aa).

Residue D74 participates in Mg(2+) binding. A Zn(2+)-binding site is contributed by C75. Positions 76 and 78 each coordinate Mg(2+). The Zn(2+) site is built by C91 and C98.

Belongs to the PRA-CH family. As to quaternary structure, homodimer. Requires Mg(2+) as cofactor. Zn(2+) is required as a cofactor.

Its subcellular location is the cytoplasm. The enzyme catalyses 1-(5-phospho-beta-D-ribosyl)-5'-AMP + H2O = 1-(5-phospho-beta-D-ribosyl)-5-[(5-phospho-beta-D-ribosylamino)methylideneamino]imidazole-4-carboxamide. Its pathway is amino-acid biosynthesis; L-histidine biosynthesis; L-histidine from 5-phospho-alpha-D-ribose 1-diphosphate: step 3/9. Catalyzes the hydrolysis of the adenine ring of phosphoribosyl-AMP. This is Phosphoribosyl-AMP cyclohydrolase from Lacticaseibacillus paracasei (strain ATCC 334 / BCRC 17002 / CCUG 31169 / CIP 107868 / KCTC 3260 / NRRL B-441) (Lactobacillus paracasei).